The chain runs to 383 residues: S-adenosylmethionine synthase (383 aa).

His-15 lines the ATP pocket. Residue Asp-17 participates in Mg(2+) binding. Residue Glu-43 participates in K(+) binding. L-methionine-binding residues include Glu-56 and Gln-99. Positions 99-109 are flexible loop; the sequence is QSPDINQGVDR. ATP contacts are provided by residues 164–166, 230–231, Asp-239, 245–246, Ala-262, and Lys-266; these read DAK, RF, and RK. Position 239 (Asp-239) interacts with L-methionine. Residue Lys-270 participates in L-methionine binding.

It belongs to the AdoMet synthase family. In terms of assembly, homotetramer; dimer of dimers. Mg(2+) serves as cofactor. It depends on K(+) as a cofactor.

Its subcellular location is the cytoplasm. The catalysed reaction is L-methionine + ATP + H2O = S-adenosyl-L-methionine + phosphate + diphosphate. Its pathway is amino-acid biosynthesis; S-adenosyl-L-methionine biosynthesis; S-adenosyl-L-methionine from L-methionine: step 1/1. Functionally, catalyzes the formation of S-adenosylmethionine (AdoMet) from methionine and ATP. The overall synthetic reaction is composed of two sequential steps, AdoMet formation and the subsequent tripolyphosphate hydrolysis which occurs prior to release of AdoMet from the enzyme. The chain is S-adenosylmethionine synthase from Shewanella sp. (strain ANA-3).